A 125-amino-acid polypeptide reads, in one-letter code: UPF0102 protein PA4424 (125 aa).

This sequence belongs to the UPF0102 family.

This is UPF0102 protein PA4424 from Pseudomonas aeruginosa (strain ATCC 15692 / DSM 22644 / CIP 104116 / JCM 14847 / LMG 12228 / 1C / PRS 101 / PAO1).